Here is a 375-residue protein sequence, read N- to C-terminus: MMEDDGQPRTLYVGNLSRDVTEVLILQLFSQIGPCKSCKMITEHTSNDPYCFVEFYEHRDAAAALAAMNGRKILGKEVKVNWATTPSSQKKDTSNHFHVFVGDLSPEITTEDIKSAFAPFGKISDARVVKDMATGKSKGYGFVSFYNKLDAENAIVHMGGQWLGGRQIRTNWATRKPPAPKSTQENNTKQLRFEDVVNQSSPKNCTVYCGGIASGLTDQLMRQTFSPFGQIMEIRVFPEKGYSFVRFSTHESAAHAIVSVNGTTIEGHVVKCYWGKESPDMTKNFQQVDYSQWGQWSQVYGNPQQYGQYMANGWQVPPYGVYGQPWNQQGFGVDQSPSAAWMGGFGAQPPQGQAPPPVIPPPNQAGYGMASYQTQ.

RRM domains follow at residues 9-85 (RTLY…WATT) and 97-175 (FHVF…WATR). The residue at position 122 (Lys-122) is an N6-acetyllysine. The residue at position 201 (Ser-201) is a Phosphoserine. Residues 205-277 (CTVYCGGIAS…HVVKCYWGKE (73 aa)) form the RRM 3 domain. The tract at residues 345 to 375 (FGAQPPQGQAPPPVIPPPNQAGYGMASYQTQ) is disordered. Residues 352–363 (GQAPPPVIPPPN) show a composition bias toward pro residues.

Interacts with FASTK. In terms of processing, phosphorylated by MAPK14 following DNA damage, releasing TIAR from GADD45A mRNA. As to expression, expressed in brain, heart, kidney, lung and skeletal muscle.

It localises to the nucleus. It is found in the cytoplasm. Its subcellular location is the cytolytic granule. The protein localises to the stress granule. Its function is as follows. RNA-binding protein involved in alternative pre-RNA splicing and in cytoplasmic stress granules formation. Shows a preference for uridine-rich RNAs. Activates splicing of alternative exons with weak 5' splice sites followed by a U-rich stretch on its own pre-mRNA and on TIA1 mRNA. Promotes the inclusion of TIA1 exon 5 to give rise to the long isoform (isoform a) of TIA1. Acts downstream of the stress-induced phosphorylation of EIF2S1/EIF2A to promote the recruitment of untranslated mRNAs to cytoplasmic stress granules (SG). Possesses nucleolytic activity against cytotoxic lymphocyte target cells. May be involved in apoptosis. This chain is Nucleolysin TIAR (TIAL1), found in Homo sapiens (Human).